The sequence spans 57 residues: uncharacterized protein (57 aa).

A signal peptide spans 1–22 (MNEIIITIIVLILLLFITLSRN). A coiled-coil region spans residues 26–57 (NNQSNNGKKEKLIKCKKEVQQLRQKLDQLTFQ).

This is an uncharacterized protein from Acheta domesticus (House cricket).